Here is a 1458-residue protein sequence, read N- to C-terminus: ATPase family AAA domain-containing protein 2B (1458 aa).

A disordered region spans residues 1–155 (MVNTRKSSLR…LRGEKKGDGD (155 aa)). The residue at position 16 (Ser16) is a Phosphoserine. A compositionally biased stretch (gly residues) spans 23-33 (PGAGAEPGATG). Positions 34–58 (GSSHFISSRTRSSKTRAASCPAAKA) are enriched in low complexity. Residues Ser79, Ser81, and Ser86 each carry the phosphoserine modification. Over residues 99-115 (VCKDKSKSRSTGQREEW) the composition is skewed to basic and acidic residues. Over residues 116–129 (NLSTGQARLTSQPG) the composition is skewed to polar residues. A Phosphoserine modification is found at Ser140. Thr221 carries the phosphothreonine modification. The disordered stretch occupies residues 244–286 (NSYGIQNHHEVSTEGEEEESQEEDGDIEVEEAEGEENDRPYNL). The segment covering 256 to 279 (TEGEEEESQEEDGDIEVEEAEGEE) has biased composition (acidic residues). At Ser318 the chain carries Phosphoserine. The segment covering 321 to 332 (RRSHIRRKKHAI) has biased composition (basic residues). The interval 321-353 (RRSHIRRKKHAIHSSDTTSSDEERFERRKSKSM) is disordered. ATP is bound at residue 441-448 (GPPGTGKT). Ser939 is modified (phosphoserine). A coiled-coil region spans residues 943–974 (QLSESEKSRMEDQEENTLRELRLFLRDVTKRL). Residues 951–1066 (RMEDQEENTL…DTAHAIIAAE (116 aa)) form the Bromo domain. Disordered stretches follow at residues 1189-1208 (DCHE…NDES), 1217-1257 (QGQR…EQTS), and 1309-1330 (LLED…DDLE). Over residues 1240-1252 (NESLLVNSSSSLN) the composition is skewed to low complexity. Phosphoserine occurs at positions 1338 and 1347.

The protein belongs to the AAA ATPase family. Binds acetylated lysine residues in histone H1.4, H2A, H2B, H3 and H4 (in vitro).

The protein resides in the nucleus. The sequence is that of ATPase family AAA domain-containing protein 2B (ATAD2B) from Homo sapiens (Human).